A 565-amino-acid polypeptide reads, in one-letter code: NAD-dependent malic enzyme (565 aa).

Tyr104 functions as the Proton donor in the catalytic mechanism. Position 157 (Arg157) interacts with NAD(+). The active-site Proton acceptor is Lys175. Residues Glu246, Asp247, and Asp270 each contribute to the a divalent metal cation site. Residues Asp270 and Asn418 each contribute to the NAD(+) site.

Belongs to the malic enzymes family. Homotetramer. The cofactor is Mg(2+). Requires Mn(2+) as cofactor.

It catalyses the reaction (S)-malate + NAD(+) = pyruvate + CO2 + NADH. It carries out the reaction oxaloacetate + H(+) = pyruvate + CO2. The polypeptide is NAD-dependent malic enzyme (Escherichia coli (strain K12 / MC4100 / BW2952)).